Reading from the N-terminus, the 409-residue chain is Gamma-glutamyl phosphate reductase (409 aa).

The protein belongs to the gamma-glutamyl phosphate reductase family.

It is found in the cytoplasm. It carries out the reaction L-glutamate 5-semialdehyde + phosphate + NADP(+) = L-glutamyl 5-phosphate + NADPH + H(+). Its pathway is amino-acid biosynthesis; L-proline biosynthesis; L-glutamate 5-semialdehyde from L-glutamate: step 2/2. Functionally, catalyzes the NADPH-dependent reduction of L-glutamate 5-phosphate into L-glutamate 5-semialdehyde and phosphate. The product spontaneously undergoes cyclization to form 1-pyrroline-5-carboxylate. The polypeptide is Gamma-glutamyl phosphate reductase (Mycobacterium leprae (strain TN)).